Consider the following 149-residue polypeptide: SsrA-binding protein (149 aa).

Positions G121–H149 are disordered. The segment covering K127–R142 has biased composition (basic and acidic residues).

The protein belongs to the SmpB family.

Its subcellular location is the cytoplasm. Its function is as follows. Required for rescue of stalled ribosomes mediated by trans-translation. Binds to transfer-messenger RNA (tmRNA), required for stable association of tmRNA with ribosomes. tmRNA and SmpB together mimic tRNA shape, replacing the anticodon stem-loop with SmpB. tmRNA is encoded by the ssrA gene; the 2 termini fold to resemble tRNA(Ala) and it encodes a 'tag peptide', a short internal open reading frame. During trans-translation Ala-aminoacylated tmRNA acts like a tRNA, entering the A-site of stalled ribosomes, displacing the stalled mRNA. The ribosome then switches to translate the ORF on the tmRNA; the nascent peptide is terminated with the 'tag peptide' encoded by the tmRNA and targeted for degradation. The ribosome is freed to recommence translation, which seems to be the essential function of trans-translation. This chain is SsrA-binding protein, found in Thiobacillus denitrificans (strain ATCC 25259 / T1).